The following is a 323-amino-acid chain: uncharacterized protein (323 aa).

The S4 RNA-binding domain occupies 16–95 (QRIDQFCLKI…DKLKIIFEDE (80 aa)). Asp-148 is an active-site residue.

It belongs to the pseudouridine synthase RluA family.

It carries out the reaction a uridine in RNA = a pseudouridine in RNA. This is an uncharacterized protein from Mycoplasma genitalium (strain ATCC 33530 / DSM 19775 / NCTC 10195 / G37) (Mycoplasmoides genitalium).